Consider the following 309-residue polypeptide: Oxidoreductase NAD-binding domain-containing protein 1 (309 aa).

The signal sequence occupies residues 1–14 (MVVVIPRLLRGSLG). Residues 47–161 (HLERTADVVR…VGGEFFFDPK (115 aa)) form the FAD-binding FR-type domain. NAD(+) is bound at residue 175–180 (GVGINP).

The chain is Oxidoreductase NAD-binding domain-containing protein 1 (OXNAD1) from Bos taurus (Bovine).